Consider the following 325-residue polypeptide: NADH-quinone oxidoreductase subunit H (325 aa).

The next 9 helical transmembrane spans lie at 11-31 (ILLS…CGAF), 50-69 (NRVG…KMFF), 81-101 (VIFT…FAIV), 114-134 (IGIL…LFAG), 154-174 (LSYE…AGSF), 186-206 (IWNV…GVAV), 237-257 (FFVG…TLFF), 265-285 (LPPF…FILI), and 304-324 (VCLP…LWQA).

This sequence belongs to the complex I subunit 1 family. As to quaternary structure, NDH-1 is composed of 13 different subunits. Subunits NuoA, H, J, K, L, M, N constitute the membrane sector of the complex.

Its subcellular location is the cell inner membrane. It carries out the reaction a quinone + NADH + 5 H(+)(in) = a quinol + NAD(+) + 4 H(+)(out). Its function is as follows. NDH-1 shuttles electrons from NADH, via FMN and iron-sulfur (Fe-S) centers, to quinones in the respiratory chain. The immediate electron acceptor for the enzyme in this species is believed to be ubiquinone. Couples the redox reaction to proton translocation (for every two electrons transferred, four hydrogen ions are translocated across the cytoplasmic membrane), and thus conserves the redox energy in a proton gradient. This subunit may bind ubiquinone. In Citrobacter koseri (strain ATCC BAA-895 / CDC 4225-83 / SGSC4696), this protein is NADH-quinone oxidoreductase subunit H.